Consider the following 44-residue polypeptide: Cytochrome b559 subunit beta (44 aa).

A helical membrane pass occupies residues 19–35; that stretch reads WLSVHALAVPTVFFIGA. A heme-binding site is contributed by histidine 23.

This sequence belongs to the PsbE/PsbF family. In terms of assembly, heterodimer of an alpha subunit and a beta subunit. PSII is composed of 1 copy each of membrane proteins PsbA, PsbB, PsbC, PsbD, PsbE, PsbF, PsbH, PsbI, PsbJ, PsbK, PsbL, PsbM, PsbT, PsbX, PsbY, PsbZ, Psb30/Ycf12, peripheral proteins PsbO, CyanoQ (PsbQ), PsbU, PsbV and a large number of cofactors. It forms dimeric complexes. It depends on heme b as a cofactor.

The protein localises to the cellular thylakoid membrane. This b-type cytochrome is tightly associated with the reaction center of photosystem II (PSII). PSII is a light-driven water:plastoquinone oxidoreductase that uses light energy to abstract electrons from H(2)O, generating O(2) and a proton gradient subsequently used for ATP formation. It consists of a core antenna complex that captures photons, and an electron transfer chain that converts photonic excitation into a charge separation. This is Cytochrome b559 subunit beta from Rippkaea orientalis (strain PCC 8801 / RF-1) (Cyanothece sp. (strain PCC 8801)).